We begin with the raw amino-acid sequence, 494 residues long: Gabija protein GajB (494 aa).

Positions 1–229 (MSREQIIKDG…YHLTSNFRCC (229 aa)) constitute a UvrD-like helicase ATP-binding domain. Position 17–24 (17–24 (AGAGSGKT)) interacts with ATP.

It belongs to the helicase family. As to quaternary structure, homodimer. Interacts with GajA; 2 GajB dimers dock at opposite sides of the GajA complex to form a 4:4 GajA-GajB assembly (GajAB). GajAB interacts with Bacillus phage Phi3T Gad1 protein; this interaction forms a 4:4:8 GajAB-Gad1 complex and leads to GajAB inhibition.

Its function is as follows. Component of antiviral defense system Gabija type I, composed of GajA and GajB. Expression of Gabija type I in B.subtilis (strain BEST7003) confers resistance to phages phi105, phi29, rho14, SpBeta and SBSphiC. Expression of Gabija type I in E.coli B (strain ATCC 11303) confers resistance to phage T7. May be a helicase or contribute to GajA activation. In Bacillus cereus (strain VD045), this protein is Gabija protein GajB.